Here is a 360-residue protein sequence, read N- to C-terminus: GTPase Obg (360 aa).

In terms of domain architecture, Obg spans 1-156 (MFVDSVEIII…KCVRLELKLI (156 aa)). The OBG-type G domain maps to 157–360 (ADIGLVGFPN…LKFVLLKALQ (204 aa)). GTP contacts are provided by residues 163-170 (GFPNAGKS), 188-192 (FTTLV), 210-213 (DIPG), 279-282 (NKCD), and 341-343 (SAV). Residues Ser170 and Thr190 each contribute to the Mg(2+) site.

This sequence belongs to the TRAFAC class OBG-HflX-like GTPase superfamily. OBG GTPase family. As to quaternary structure, monomer. The cofactor is Mg(2+).

It is found in the cytoplasm. Functionally, an essential GTPase which binds GTP, GDP and possibly (p)ppGpp with moderate affinity, with high nucleotide exchange rates and a fairly low GTP hydrolysis rate. Plays a role in control of the cell cycle, stress response, ribosome biogenesis and in those bacteria that undergo differentiation, in morphogenesis control. This chain is GTPase Obg, found in Helicobacter pylori (strain P12).